We begin with the raw amino-acid sequence, 229 residues long: Histone H1 (229 aa).

2 disordered regions span residues 1–52 (MADT…SSHP) and 125–229 (APAL…RTRK). Over residues 32–45 (KEKKKVIAAKKPKS) the composition is skewed to basic residues. The region spanning 50 to 119 (SHPSFFEMIS…KVKNSFKLPS (70 aa)) is the H15 domain. Positions 125–138 (APALAKKPTIPKPK) are enriched in low complexity. Residues 139–160 (VAAKPKTAKIGAKPKAKAKVAA) are compositionally biased toward basic residues. Composition is skewed to low complexity over residues 161-177 (KTKA…PAAK) and 185-205 (KPKT…VASP). Basic residues predominate over residues 206–229 (GKKKAVPVKKVKTVKSPAGKRTRK).

The protein belongs to the histone H1/H5 family.

The protein localises to the nucleus. It localises to the chromosome. Its function is as follows. Histones H1 are necessary for the condensation of nucleosome chains into higher-order structures. This is Histone H1 from Euphorbia esula (Leafy spurge).